We begin with the raw amino-acid sequence, 869 residues long: MAGCRGSLCCCCRWCCCCGERETRTPEELTILGETQEEEDEILPRKDYESLDYDRCINDPYLEVLETMDNKKGRRYEAVKWMVVFAIGVCTGLVGLFVDFFVRLFTQLKFGVVQTSVEECSQKGCLALSLLELLGFNLTFVFLASLLVLIEPVAAGSGIPEVKCYLNGVKVPGIVRLRTLLCKVLGVLFSVAGGLFVEKEGPMIHSGSVVGAGLPQFQSISLRKIQFNFPYFRSDRDKRDFVSAGAAAGVAAAFGAPIGGTLFSLEEGSSFWNQGLTWKVLFCSMSATFTLNFFRSGIQFGSWGSFQLPGLLNFGEFKCSDSDKKCHLWTAMDLGFFVVMGVIGGLLGATFNCLNKRLAKYRMRNVHPKPKLVRVLESLLVSLVTTVVVFVASMVLGECRQMSSSSQIGNDSFQLQVTEDVNSSIKTFFCPNDTYNDMATLFFNPQESAILQLFHQDGTFSPVTLALFFVLYFLLACWTYGISVPSGLFVPSLLCGAAFGRLVANVLKSYIGLGHIYSGTFALIGAAAFLGGVVRMTISLTVILIESTNEITYGLPIMVTLMVAKWTGDFFNKGIYDIHVGLRGVPLLEWETEVEMDKLRASDIMEPNLTYVYPHTRIQSLVSILRTTVHHAFPVVTENRGNEKEFMKGNQLISNNIKFKKSSILTRAGEQRKRSQSMKSYPSSELRNMCDEHIASEEPAEKEDLLQQMLERRYTPYPNLYPDQSPSEDWTMEERFRPLTFHGLILRSQLVTLLVRGVCYSESQSSASQPRLSYAEMAEDYPRYPDIHDLDLTLLNPRMIVDVTPYMNPSPFTVSPNTHVSQVFNLFRTMGLRHLPVVNAVGEIVGIITRHNLTYEFLQARLRQHYQTI.

The Cytoplasmic segment spans residues 1–80; it reads MAGCRGSLCC…KKGRRYEAVK (80 aa). Transmembrane regions (helical) follow at residues 81 to 113 and 128 to 150; these read WMVV…FGVV and LSLL…LVLI. A Selectivity filter part_1 motif is present at residues 156–160; sequence GSGIP. A chloride-binding site is contributed by S157. An intramembrane region (helical) is located at residues 159–166; that stretch reads IPEVKCYL. Helical transmembrane passes span 176 to 194 and 200 to 217; these read RLRT…VAGG and EGPM…LPQF. Positions 198-202 match the Selectivity filter part_2 motif; it reads EKEGP. 2 intramembrane regions (helical) span residues 241–253 and 257–265; these read FVSA…VAAA and PIGGTLFSL. Helical transmembrane passes span 277-294, 335-364, and 371-392; these read TWKV…LNFF, GFFV…YRMR, and KLVR…VFVA. 3 N-linked (GlcNAc...) asparagine glycosylation sites follow: N410, N422, and N432. The next 2 membrane-spanning stretches (helical) occupy residues 462-481 and 487-511; these read PVTL…WTYG and GLFV…KSYI. Residues 487 to 491 carry the Selectivity filter part_3 motif; the sequence is GLFVP. Residue F489 coordinates chloride. The helical intramembrane region spans 519–533; it reads GTFALIGAAAFLGGV. Positions 534–536 form an intramembrane region, note=Loop between two helices; it reads VRM. Positions 537-548 form an intramembrane region, helical; that stretch reads TISLTVILIEST. An intramembrane region (note=Loop between two helices) is located at residues 549–552; the sequence is NEIT. The helical transmembrane segment at 553 to 571 threads the bilayer; the sequence is YGLPIMVTLMVAKWTGDFF. The Cytoplasmic portion of the chain corresponds to 572–869; that stretch reads NKGIYDIHVG…ARLRQHYQTI (298 aa). Y576 contributes to the chloride binding site. The CBS 1 domain maps to 605–662; the sequence is MEPNLTYVYPHTRIQSLVSILRTTVHHAFPVVTENRGNEKEFMKGNQLISNNIKFKKS. 630–632 contributes to the ATP binding site; the sequence is HHA. S773 bears the Phosphoserine mark. One can recognise a CBS 2 domain in the interval 807–868; sequence MNPSPFTVSP…QARLRQHYQT (62 aa). ATP is bound at residue 849-852; that stretch reads TRHN.

This sequence belongs to the chloride channel (TC 2.A.49) family. ClC-6/CLCN6 subfamily. Post-translationally, N-glycosylated on several asparagine residues. Testis, ovary, small intestine, brain and skeletal muscle. Low level expression in aortic and coronary vascular smooth muscle cells, and aortic endothelial cells. Isoform 3 is only detected in kidney.

The protein resides in the late endosome membrane. It catalyses the reaction 2 chloride(in) + H(+)(out) = 2 chloride(out) + H(+)(in). Functionally, voltage-gated channel mediating the exchange of chloride ions against protons. Functions as antiporter and contributes to the acidification of the late endosome lumen. The CLC channel family contains both chloride channels and proton-coupled anion transporters that exchange chloride or another anion for protons. The presence of conserved gating glutamate residues is typical for family members that function as antiporters. The protein is H(+)/Cl(-) exchange transporter 6 of Homo sapiens (Human).